A 362-amino-acid polypeptide reads, in one-letter code: Phosphatidylserine decarboxylase proenzyme (362 aa).

Residues 26-44 (YLLTGVTILSFIFMFQYKY) form a helical membrane-spanning segment. Residues Asp-147, His-206, and Ser-316 each act as charge relay system; for autoendoproteolytic cleavage activity in the active site. Ser-316 serves as the catalytic Schiff-base intermediate with substrate; via pyruvic acid; for decarboxylase activity. Ser-316 is modified (pyruvic acid (Ser); by autocatalysis).

Belongs to the phosphatidylserine decarboxylase family. PSD-B subfamily. Eukaryotic type I sub-subfamily. Heterodimer of a large membrane-associated beta subunit and a small pyruvoyl-containing alpha subunit. Pyruvate serves as cofactor. Post-translationally, is synthesized initially as an inactive proenzyme. Formation of the active enzyme involves a self-maturation process in which the active site pyruvoyl group is generated from an internal serine residue via an autocatalytic post-translational modification. Two non-identical subunits are generated from the proenzyme in this reaction, and the pyruvate is formed at the N-terminus of the alpha chain, which is derived from the carboxyl end of the proenzyme. The autoendoproteolytic cleavage occurs by a canonical serine protease mechanism, in which the side chain hydroxyl group of the serine supplies its oxygen atom to form the C-terminus of the beta chain, while the remainder of the serine residue undergoes an oxidative deamination to produce ammonia and the pyruvoyl prosthetic group on the alpha chain. During this reaction, the Ser that is part of the protease active site of the proenzyme becomes the pyruvoyl prosthetic group, which constitutes an essential element of the active site of the mature decarboxylase.

The protein resides in the endoplasmic reticulum membrane. It catalyses the reaction a 1,2-diacyl-sn-glycero-3-phospho-L-serine + H(+) = a 1,2-diacyl-sn-glycero-3-phosphoethanolamine + CO2. Its pathway is phospholipid metabolism; phosphatidylethanolamine biosynthesis; phosphatidylethanolamine from CDP-diacylglycerol: step 2/2. In terms of biological role, catalyzes the formation of phosphatidylethanolamine (PtdEtn) from phosphatidylserine (PtdSer). Plays a central role in phospholipid metabolism and in the interorganelle trafficking of phosphatidylserine. The sequence is that of Phosphatidylserine decarboxylase proenzyme from Plasmodium falciparum.